The primary structure comprises 573 residues: Chromosomal replication initiator protein DnaA (573 aa).

Residues 1–85 are domain I, interacts with DnaA modulators; the sequence is MSQNSSSLLE…TKVLSMRMGR (85 aa). The segment at 85–231 is domain II; sequence RSFSLAVSVE…TPAHNPNREV (147 aa). The tract at residues 91 to 232 is disordered; the sequence is VSVEPSRDGE…PAHNPNREVS (142 aa). The segment covering 116-169 has biased composition (low complexity); that stretch reads PYPGQGPQSPQGQQGQQGQHPVQQEVRAHAPAPHQQGQHQAAQHQPPANQAPGQ. A compositionally biased stretch (polar residues) spans 178 to 191; sequence QASQSAGAWEQTHS. Pro residues predominate over residues 202–213; the sequence is SPAPVEPPPQPA. Residues 232-448 form a domain III, AAA+ region region; it reads SLNPKYTFEN…GALIRVSAYS (217 aa). Residues Gly276, Gly278, Lys279, and Thr280 each coordinate ATP. The interval 449 to 573 is domain IV, binds dsDNA; it reads SLINQPIDKE…TQLIKSRGRN (125 aa).

It belongs to the DnaA family. Oligomerizes as a right-handed, spiral filament on DNA at oriC.

The protein localises to the cytoplasm. Functionally, plays an essential role in the initiation and regulation of chromosomal replication. ATP-DnaA binds to the origin of replication (oriC) to initiate formation of the DNA replication initiation complex once per cell cycle. Binds the DnaA box (a 9 base pair repeat at the origin) and separates the double-stranded (ds)DNA. Forms a right-handed helical filament on oriC DNA; dsDNA binds to the exterior of the filament while single-stranded (ss)DNA is stabiized in the filament's interior. The ATP-DnaA-oriC complex binds and stabilizes one strand of the AT-rich DNA unwinding element (DUE), permitting loading of DNA polymerase. After initiation quickly degrades to an ADP-DnaA complex that is not apt for DNA replication. Binds acidic phospholipids. This Corynebacterium efficiens (strain DSM 44549 / YS-314 / AJ 12310 / JCM 11189 / NBRC 100395) protein is Chromosomal replication initiator protein DnaA.